The following is a 247-amino-acid chain: Probable transcriptional regulatory protein Dalk_2958 (247 aa).

The protein belongs to the TACO1 family.

Its subcellular location is the cytoplasm. The polypeptide is Probable transcriptional regulatory protein Dalk_2958 (Desulfatibacillum aliphaticivorans).